Reading from the N-terminus, the 357-residue chain is 3-isopropylmalate dehydrogenase (357 aa).

Residue 77 to 90 coordinates NAD(+); the sequence is GPKWDTLPGEKRPE. The substrate site is built by Arg-97, Arg-107, Arg-136, and Asp-224. Positions 224, 248, and 252 each coordinate Mg(2+). Position 282-294 (282-294) interacts with NAD(+); the sequence is GSAPDIAGQDLAN.

It belongs to the isocitrate and isopropylmalate dehydrogenases family. LeuB type 1 subfamily. As to quaternary structure, homodimer. Mg(2+) serves as cofactor. Mn(2+) is required as a cofactor.

It localises to the cytoplasm. It carries out the reaction (2R,3S)-3-isopropylmalate + NAD(+) = 4-methyl-2-oxopentanoate + CO2 + NADH. It participates in amino-acid biosynthesis; L-leucine biosynthesis; L-leucine from 3-methyl-2-oxobutanoate: step 3/4. Catalyzes the oxidation of 3-carboxy-2-hydroxy-4-methylpentanoate (3-isopropylmalate) to 3-carboxy-4-methyl-2-oxopentanoate. The product decarboxylates to 4-methyl-2 oxopentanoate. This Clostridium acetobutylicum (strain ATCC 824 / DSM 792 / JCM 1419 / IAM 19013 / LMG 5710 / NBRC 13948 / NRRL B-527 / VKM B-1787 / 2291 / W) protein is 3-isopropylmalate dehydrogenase.